Reading from the N-terminus, the 363-residue chain is Chorismate synthase (363 aa).

NADP(+) contacts are provided by R48 and R54. FMN is bound by residues 125 to 127 (RSS), 237 to 238 (NA), G277, 292 to 296 (KPTSS), and R318.

It belongs to the chorismate synthase family. In terms of assembly, homotetramer. The cofactor is FMNH2.

It carries out the reaction 5-O-(1-carboxyvinyl)-3-phosphoshikimate = chorismate + phosphate. It participates in metabolic intermediate biosynthesis; chorismate biosynthesis; chorismate from D-erythrose 4-phosphate and phosphoenolpyruvate: step 7/7. Its function is as follows. Catalyzes the anti-1,4-elimination of the C-3 phosphate and the C-6 proR hydrogen from 5-enolpyruvylshikimate-3-phosphate (EPSP) to yield chorismate, which is the branch point compound that serves as the starting substrate for the three terminal pathways of aromatic amino acid biosynthesis. This reaction introduces a second double bond into the aromatic ring system. This chain is Chorismate synthase, found in Pseudomonas entomophila (strain L48).